The primary structure comprises 279 residues: Large ribosomal subunit protein uL2 (279 aa).

The disordered stretch occupies residues 227-279; sequence GVAMNPVDHPMGGGEGKTSGGRHPVSPWGFPTKGKKTRDPNKLSSKFIKSKKR.

Belongs to the universal ribosomal protein uL2 family. As to quaternary structure, part of the 50S ribosomal subunit. Forms a bridge to the 30S subunit in the 70S ribosome.

Functionally, one of the primary rRNA binding proteins. Required for association of the 30S and 50S subunits to form the 70S ribosome, for tRNA binding and peptide bond formation. It has been suggested to have peptidyltransferase activity; this is somewhat controversial. Makes several contacts with the 16S rRNA in the 70S ribosome. This Neorickettsia sennetsu (strain ATCC VR-367 / Miyayama) (Ehrlichia sennetsu) protein is Large ribosomal subunit protein uL2.